We begin with the raw amino-acid sequence, 265 residues long: tRNA pseudouridine synthase A (265 aa).

The active-site Nucleophile is the aspartate 52. Residue tyrosine 110 participates in substrate binding. The tract at residues 244 to 265 (FYRDGPPARTPGGTTDAEEDEG) is disordered.

The protein belongs to the tRNA pseudouridine synthase TruA family. In terms of assembly, homodimer.

The enzyme catalyses uridine(38/39/40) in tRNA = pseudouridine(38/39/40) in tRNA. Formation of pseudouridine at positions 38, 39 and 40 in the anticodon stem and loop of transfer RNAs. The polypeptide is tRNA pseudouridine synthase A (Myxococcus xanthus).